The primary structure comprises 589 residues: ATP-dependent lipid A-core flippase (589 aa).

Transmembrane regions (helical) follow at residues 29-49 (WLLV…STFL), 68-88 (ALWL…AGYI), 157-177 (VIGA…AILL), 254-274 (ISSA…LLIA), and 283-303 (LSPG…PALK). The 283-residue stretch at 32 to 314 (VVAACGALLE…LTNVQNMLQS (283 aa)) folds into the ABC transmembrane type-1 domain. Residues 346-582 (IEFRGITARY…DGLYAYLYSM (237 aa)) enclose the ABC transporter domain. Residue 380–387 (GRSGSGKS) coordinates ATP.

This sequence belongs to the ABC transporter superfamily. Lipid exporter (TC 3.A.1.106) family. Homodimer.

It localises to the cell inner membrane. It catalyses the reaction ATP + H2O + lipid A-core oligosaccharideSide 1 = ADP + phosphate + lipid A-core oligosaccharideSide 2.. Its function is as follows. Involved in lipopolysaccharide (LPS) biosynthesis. Translocates lipid A-core from the inner to the outer leaflet of the inner membrane. Transmembrane domains (TMD) form a pore in the inner membrane and the ATP-binding domain (NBD) is responsible for energy generation. In Xylella fastidiosa (strain Temecula1 / ATCC 700964), this protein is ATP-dependent lipid A-core flippase.